The primary structure comprises 337 residues: ERI1 exoribonuclease 3 (337 aa).

The 175-residue stretch at 146-320 folds into the Exonuclease domain; that stretch reads FLVLDFEATC…DDCKNIANIM (175 aa). Mg(2+)-binding residues include D150, E152, and D249. E152 acts as the Proton acceptor in catalysis. E152 contributes to the AMP binding site. Catalysis depends on H307, which acts as the Proton acceptor. An AMP-binding site is contributed by H307. D312 lines the Mg(2+) pocket.

Interacts with PRNP. It depends on Mg(2+) as a cofactor.

The chain is ERI1 exoribonuclease 3 (ERI3) from Bos taurus (Bovine).